The chain runs to 294 residues: NAD kinase (294 aa).

The active-site Proton acceptor is the D74. NAD(+) is bound by residues 74 to 75 (DG), 148 to 149 (NE), H159, R176, D178, 189 to 194 (TAYSLS), and Q249.

The protein belongs to the NAD kinase family. A divalent metal cation is required as a cofactor.

It is found in the cytoplasm. It carries out the reaction NAD(+) + ATP = ADP + NADP(+) + H(+). Involved in the regulation of the intracellular balance of NAD and NADP, and is a key enzyme in the biosynthesis of NADP. Catalyzes specifically the phosphorylation on 2'-hydroxyl of the adenosine moiety of NAD to yield NADP. The polypeptide is NAD kinase (Vibrio vulnificus (strain YJ016)).